We begin with the raw amino-acid sequence, 245 residues long: DNA repair protein RecO (245 aa).

The protein belongs to the RecO family.

In terms of biological role, involved in DNA repair and RecF pathway recombination. This chain is DNA repair protein RecO, found in Erwinia tasmaniensis (strain DSM 17950 / CFBP 7177 / CIP 109463 / NCPPB 4357 / Et1/99).